Reading from the N-terminus, the 235-residue chain is Eukaryotic translation initiation factor 4E-1 (235 aa).

Over residues 1–16 the composition is skewed to basic and acidic residues; the sequence is MAVEDTPKSVVTEEAK. The interval 1–59 is disordered; sequence MAVEDTPKSVVTEEAKPNSIENPIDRYHEEGDDAEEGEIAGGEGDGNVDESSKSGVPES. EIF4G-binding regions lie at residues 60–63 and 70–106; these read HPLE and FDNPAVKSKQTSWGSSLRPVFTFSTVEEFWSLYNNMK. MRNA contacts are provided by residues 78–83, K110, and 128–129; these read KQTSWG and WE. A disulfide bridge links C133 with C171. The segment at 154–163 is EIF4G-binding; the sequence is YTLLALIGEQ. MRNA contacts are provided by residues 178–183 and 223–227; these read RGKQER and KKLDR.

The protein belongs to the eukaryotic initiation factor 4E family. In terms of assembly, EIF4F is a multi-subunit complex, the composition of which varies with external and internal environmental conditions. It is composed of at least EIF4A, EIF4E and EIF4G. EIF4E is also known to interact with other partners. In higher plants two isoforms of EIF4F have been identified, named isoform EIF4F and isoform EIF(iso)4F. Isoform EIF4F has subunits p220 and p26, whereas isoform EIF(iso)4F has subunits p82 and p28. Interacts directly with EXA1. As to quaternary structure, (Microbial infection) Interacts with viral genome-linked protein (VPg); this interaction is possible in susceptible hosts but impaired in resistant plants. Post-translationally, according to the redox status, the Cys-133-Cys-171 disulfide bridge may have a role in regulating protein function by affecting its ability to bind capped mRNA. As to expression, expressed in all tissues except in the cells of the specialization zone of the roots.

It localises to the nucleus. The protein resides in the cytoplasm. Functionally, component of the protein complex eIF4F, which is involved in the recognition of the mRNA cap, ATP-dependent unwinding of 5'-terminal secondary structure and recruitment of mRNA to the ribosome. Recognizes and binds the 7-methylguanosine-containing mRNA cap during an early step in the initiation of protein synthesis and facilitates ribosome binding by inducing the unwinding of the mRNAs secondary structures. Key component of recessive resistance to potyviruses. Its function is as follows. (Microbial infection) Susceptibility host factor required for viral infection by recruiting viral RNAs to the host ribosomal complex via an interaction with viral genome-linked protein (VPg). The polypeptide is Eukaryotic translation initiation factor 4E-1 (Arabidopsis thaliana (Mouse-ear cress)).